The following is a 144-amino-acid chain: Large ribosomal subunit protein uL15 (144 aa).

Residues 1–53 (MRLNTLSPADGSKHAPKRLGRGIGSGLGKTGGRGHKGQNSRSGGGVRRGFEGG) are disordered. Residues 21–31 (RGIGSGLGKTG) are compositionally biased toward gly residues.

Belongs to the universal ribosomal protein uL15 family. Part of the 50S ribosomal subunit.

Binds to the 23S rRNA. This Erwinia tasmaniensis (strain DSM 17950 / CFBP 7177 / CIP 109463 / NCPPB 4357 / Et1/99) protein is Large ribosomal subunit protein uL15.